Consider the following 293-residue polypeptide: NAD kinase (293 aa).

The active-site Proton acceptor is D73. NAD(+) contacts are provided by residues 73–74 (DG), 147–148 (NE), H158, R175, D177, 188–193 (TAYSLS), and Q248.

This sequence belongs to the NAD kinase family. A divalent metal cation is required as a cofactor.

Its subcellular location is the cytoplasm. It catalyses the reaction NAD(+) + ATP = ADP + NADP(+) + H(+). Functionally, involved in the regulation of the intracellular balance of NAD and NADP, and is a key enzyme in the biosynthesis of NADP. Catalyzes specifically the phosphorylation on 2'-hydroxyl of the adenosine moiety of NAD to yield NADP. This is NAD kinase from Photobacterium profundum (strain SS9).